A 348-amino-acid polypeptide reads, in one-letter code: Putative zinc metalloprotease HP_0258 (348 aa).

Position 16 (His16) interacts with Zn(2+). Glu17 is an active-site residue. His20 contributes to the Zn(2+) binding site. The next 5 helical transmembrane spans lie at 43–63 (CFFK…GGYV), 93–113 (WILF…YFFL), 247–267 (LIMG…VGAL), 275–295 (MLLL…LLPI), and 324–344 (LWLA…FNDL). In terms of domain architecture, PDZ spans 106-175 (AILVYFFLAL…GELVLEIERN (70 aa)).

This sequence belongs to the peptidase M50B family. The cofactor is Zn(2+).

The protein localises to the cell inner membrane. This is Putative zinc metalloprotease HP_0258 from Helicobacter pylori (strain ATCC 700392 / 26695) (Campylobacter pylori).